The primary structure comprises 81 residues: Photosystem I iron-sulfur center (81 aa).

4Fe-4S ferredoxin-type domains are found at residues 2 to 31 and 39 to 68; these read AHTV…MVPW and IASA…IRVY. The [4Fe-4S] cluster site is built by cysteine 11, cysteine 14, cysteine 17, cysteine 21, cysteine 48, cysteine 51, cysteine 54, and cysteine 58.

As to quaternary structure, the eukaryotic PSI reaction center is composed of at least 11 subunits. [4Fe-4S] cluster is required as a cofactor.

Its subcellular location is the plastid. It localises to the cyanelle thylakoid membrane. It carries out the reaction reduced [plastocyanin] + hnu + oxidized [2Fe-2S]-[ferredoxin] = oxidized [plastocyanin] + reduced [2Fe-2S]-[ferredoxin]. In terms of biological role, apoprotein for the two 4Fe-4S centers FA and FB of photosystem I (PSI); essential for photochemical activity. FB is the terminal electron acceptor of PSI, donating electrons to ferredoxin. The C-terminus interacts with PsaA/B/D and helps assemble the protein into the PSI complex. Required for binding of PsaD and PsaE to PSI. PSI is a cytochrome c6-ferredoxin oxidoreductase, converting photonic excitation into a charge separation, which transfers an electron from the donor P700 chlorophyll pair to the spectroscopically characterized acceptors A0, A1, FX, FA and FB in turn. This Cyanophora paradoxa protein is Photosystem I iron-sulfur center.